Consider the following 558-residue polypeptide: Phosphatidylserine lipase ABHD16A (558 aa).

Transmembrane regions (helical) follow at residues 60–80 (ILAL…FAFF) and 93–113 (VVPF…VACL). The Cytoplasmic portion of the chain corresponds to 114–558 (RGIGRWTNPQ…AQNFQMPWHL (445 aa)). Residues 281–407 (LVICCEGNAG…LVTRTVRQHL (127 aa)) enclose the AB hydrolase-1 domain. Catalysis depends on charge relay system residues Ser355, Asp430, and His507.

The protein belongs to the AB hydrolase superfamily. ABHD16 family.

It localises to the membrane. The enzyme catalyses 1-heptadecanoyl-2-(5Z,8Z,11Z,14Z-eicosatetraenoyl)-sn-glycero-3-phosphoserine + H2O = 1-heptadecanoyl-sn-glycero-3-phosphoserine + (5Z,8Z,11Z,14Z)-eicosatetraenoate + H(+). The catalysed reaction is 1-hexadecanoyl-2-(9Z-octadecenoyl)-sn-glycero-3-phospho-L-serine + H2O = 1-hexadecanoyl-sn-glycero-3-phospho-L-serine + (9Z)-octadecenoate + H(+). It catalyses the reaction 1-octadecanoyl-2-(9Z,12Z-octadecadienoyl)-sn-glycero-3-phosphoserine + H2O = 1-octadecanoyl-sn-glycero-3-phosphoserine + (9Z,12Z)-octadecadienoate + H(+). It carries out the reaction 1-heptadecanoyl-2-(5Z,8Z,11Z,14Z-eicosatetraenoyl)-sn-glycero-3-phosphocholine + H2O = 1-heptadecanoyl-sn-glycero-3-phosphocholine + (5Z,8Z,11Z,14Z)-eicosatetraenoate + H(+). The enzyme catalyses 1-hexadecanoyl-2-(9Z-octadecenoyl)-sn-glycero-3-phosphoglycerol + H2O = 1-hexadecanoyl-sn-glycero-3-phosphoglycerol + (9Z)-octadecenoate + H(+). The catalysed reaction is 1-hexadecanoyl-2-(9Z-octadecenoyl)-sn-glycero-3-phospho-(1D-myo-inositol) + H2O = 1-hexadecanoyl-sn-glycero-3-phospho-(1D-myo-inositol) + (9Z)-octadecenoate + H(+). It catalyses the reaction 1-heptadecanoyl-2-(5Z,8Z,11Z,14Z-eicosatetraenoyl)-sn-glycero-3-phosphoethanolamine + H2O = 1-heptadecanoyl-sn-glycero-3-phosphoethanolamine + (5Z,8Z,11Z,14Z)-eicosatetraenoate + H(+). It carries out the reaction 1-hexadecanoyl-2-(9Z-octadecenoyl)-sn-glycero-3-phospho-(1'-sn-glycerol) + H2O = 1-hexadecanoyl-sn-glycero-3-phospho-(1'-sn-glycerol) + (9Z)-octadecenoate + H(+). The enzyme catalyses Hydrolyzes glycerol monoesters of long-chain fatty acids.. The catalysed reaction is 1-tetradecanoylglycerol + H2O = tetradecanoate + glycerol + H(+). It catalyses the reaction 2-hexadecanoylglycerol + H2O = glycerol + hexadecanoate + H(+). It carries out the reaction 1-(9Z-octadecenoyl)-glycerol + H2O = glycerol + (9Z)-octadecenoate + H(+). The enzyme catalyses 2-(9Z-octadecenoyl)-glycerol + H2O = glycerol + (9Z)-octadecenoate + H(+). The catalysed reaction is 2-(9Z,12Z-octadecadienoyl)-glycerol + H2O = (9Z,12Z)-octadecadienoate + glycerol + H(+). It catalyses the reaction 1-(5Z,8Z,11Z,14Z-eicosatetraenoyl)-glycerol + H2O = glycerol + (5Z,8Z,11Z,14Z)-eicosatetraenoate + H(+). It carries out the reaction 2-(5Z,8Z,11Z,14Z-eicosatetraenoyl)-glycerol + H2O = glycerol + (5Z,8Z,11Z,14Z)-eicosatetraenoate + H(+). The enzyme catalyses prostaglandin D2-1-glycerol ester + H2O = prostaglandin D2 + glycerol + H(+). The catalysed reaction is 2-glyceryl-15-deoxy-Delta(12,14)-prostaglandin J2 + H2O = 15-deoxy-Delta(12,14)-prostaglandin J2 + glycerol + H(+). It catalyses the reaction 1-(9Z,12Z-octadecadienoyl)-glycerol + H2O = (9Z,12Z)-octadecadienoate + glycerol + H(+). Its function is as follows. Phosphatidylserine (PS) lipase that mediates the hydrolysis of phosphatidylserine to generate lysophosphatidylserine (LPS). LPS constitutes a class of signaling lipids that regulates immunological and neurological processes. Has no activity towards diacylglycerol, triacylglycerol or lysophosphatidylserine lipase. Also has monoacylglycerol lipase activity, with preference for 1-(9Z,12Z-octadecadienoyl)-glycerol (1-LG) and 2-glyceryl-15-deoxy-Delta(12,14)-prostaglandin J2 (15d-PGJ(2)-G). This chain is Phosphatidylserine lipase ABHD16A, found in Pongo abelii (Sumatran orangutan).